Consider the following 325-residue polypeptide: Probable tRNA pseudouridine synthase B (325 aa).

Asp-69 (nucleophile) is an active-site residue. The PUA domain occupies 236 to 311; sequence LPKIVIKDSA…IAADIQRVMM (76 aa).

It belongs to the pseudouridine synthase TruB family. Type 2 subfamily.

It carries out the reaction uridine(55) in tRNA = pseudouridine(55) in tRNA. Could be responsible for synthesis of pseudouridine from uracil-55 in the psi GC loop of transfer RNAs. The sequence is that of Probable tRNA pseudouridine synthase B from Archaeoglobus fulgidus (strain ATCC 49558 / DSM 4304 / JCM 9628 / NBRC 100126 / VC-16).